Here is a 177-residue protein sequence, read N- to C-terminus: ATP synthase subunit delta (177 aa).

It belongs to the ATPase delta chain family. As to quaternary structure, F-type ATPases have 2 components, F(1) - the catalytic core - and F(0) - the membrane proton channel. F(1) has five subunits: alpha(3), beta(3), gamma(1), delta(1), epsilon(1). F(0) has three main subunits: a(1), b(2) and c(10-14). The alpha and beta chains form an alternating ring which encloses part of the gamma chain. F(1) is attached to F(0) by a central stalk formed by the gamma and epsilon chains, while a peripheral stalk is formed by the delta and b chains.

The protein resides in the cell inner membrane. Its function is as follows. F(1)F(0) ATP synthase produces ATP from ADP in the presence of a proton or sodium gradient. F-type ATPases consist of two structural domains, F(1) containing the extramembraneous catalytic core and F(0) containing the membrane proton channel, linked together by a central stalk and a peripheral stalk. During catalysis, ATP synthesis in the catalytic domain of F(1) is coupled via a rotary mechanism of the central stalk subunits to proton translocation. In terms of biological role, this protein is part of the stalk that links CF(0) to CF(1). It either transmits conformational changes from CF(0) to CF(1) or is implicated in proton conduction. The chain is ATP synthase subunit delta from Yersinia enterocolitica serotype O:8 / biotype 1B (strain NCTC 13174 / 8081).